We begin with the raw amino-acid sequence, 227 residues long: NAD(P)H-quinone oxidoreductase subunit K, chloroplastic (227 aa).

Positions 43, 44, 108, and 139 each coordinate [4Fe-4S] cluster. A compositionally biased stretch (polar residues) spans 173–192 (RSFTTNHKFQVGRSSHTGNY). A disordered region spans residues 173–201 (RSFTTNHKFQVGRSSHTGNYDQGFLSKPP).

The protein belongs to the complex I 20 kDa subunit family. In terms of assembly, NDH is composed of at least 16 different subunits, 5 of which are encoded in the nucleus. It depends on [4Fe-4S] cluster as a cofactor.

The protein resides in the plastid. The protein localises to the chloroplast thylakoid membrane. It carries out the reaction a plastoquinone + NADH + (n+1) H(+)(in) = a plastoquinol + NAD(+) + n H(+)(out). It catalyses the reaction a plastoquinone + NADPH + (n+1) H(+)(in) = a plastoquinol + NADP(+) + n H(+)(out). Its function is as follows. NDH shuttles electrons from NAD(P)H:plastoquinone, via FMN and iron-sulfur (Fe-S) centers, to quinones in the photosynthetic chain and possibly in a chloroplast respiratory chain. The immediate electron acceptor for the enzyme in this species is believed to be plastoquinone. Couples the redox reaction to proton translocation, and thus conserves the redox energy in a proton gradient. This chain is NAD(P)H-quinone oxidoreductase subunit K, chloroplastic, found in Trachelium caeruleum (Blue throatwort).